A 424-amino-acid chain; its full sequence is Histidine--tRNA ligase (424 aa).

The protein belongs to the class-II aminoacyl-tRNA synthetase family. Homodimer.

The protein localises to the cytoplasm. The catalysed reaction is tRNA(His) + L-histidine + ATP = L-histidyl-tRNA(His) + AMP + diphosphate + H(+). The protein is Histidine--tRNA ligase of Desulfitobacterium hafniense (strain DSM 10664 / DCB-2).